A 268-amino-acid polypeptide reads, in one-letter code: tRNA pseudouridine synthase A (268 aa).

The active-site Nucleophile is the Asp63. Residue Tyr122 coordinates substrate.

The protein belongs to the tRNA pseudouridine synthase TruA family. As to quaternary structure, homodimer.

The enzyme catalyses uridine(38/39/40) in tRNA = pseudouridine(38/39/40) in tRNA. Formation of pseudouridine at positions 38, 39 and 40 in the anticodon stem and loop of transfer RNAs. This is tRNA pseudouridine synthase A from Treponema denticola (strain ATCC 35405 / DSM 14222 / CIP 103919 / JCM 8153 / KCTC 15104).